A 720-amino-acid polypeptide reads, in one-letter code: DNA helicase II (720 aa).

Positions 8–286 constitute a UvrD-like helicase ATP-binding domain; that stretch reads DSLNDKQREA…IRLEQNYRST (279 aa). Residues 32–37 and R284 contribute to the ATP site; that span reads GSGKTR. The UvrD-like helicase C-terminal domain occupies 287–564; that stretch reads SNILSAANAL…QLMTLHSAKG (278 aa).

This sequence belongs to the helicase family. UvrD subfamily.

It catalyses the reaction Couples ATP hydrolysis with the unwinding of duplex DNA by translocating in the 3'-5' direction.. It carries out the reaction ATP + H2O = ADP + phosphate + H(+). In terms of biological role, a helicase with DNA-dependent ATPase activity. Unwinds DNA duplexes with 3'-5' polarity. Translocates on single-stranded DNA with 3'-5' polarity. Initiates unwinding more efficiently from a nicked substrate than double-stranded DNA. Involved in the post-incision events of nucleotide excision repair and methyl-directed mismatch repair, and probably also in repair of alkylated DNA. This chain is DNA helicase II, found in Escherichia coli (strain K12).